The chain runs to 164 residues: HTH-type transcriptional regulator IscR (164 aa).

Positions 2 to 131 constitute an HTH rrf2-type domain; the sequence is RLTSKGRYAV…NNITLDELVN (130 aa). Positions 28-51 form a DNA-binding region, H-T-H motif; that stretch reads LADISERQGISLSYLEQLFSRLRK. Residues cysteine 92, cysteine 98, and cysteine 104 each coordinate [2Fe-2S] cluster.

[2Fe-2S] cluster is required as a cofactor.

Regulates the transcription of several operons and genes involved in the biogenesis of Fe-S clusters and Fe-S-containing proteins. This chain is HTH-type transcriptional regulator IscR, found in Pectobacterium carotovorum subsp. carotovorum (strain PC1).